Reading from the N-terminus, the 606-residue chain is Mannan endo-1,4-beta-mannosidase A (606 aa).

The first 19 residues, 1–19 (MKSLNVILTLLSLIISVLS), serve as a signal peptide directing secretion. A CBM6 domain is found at 22–140 (VYYEAEDGKL…WMWVDAFVIN (119 aa)). Residues 164 to 458 (PAAKKLYDFL…FNHKTVMNMD (295 aa)) enclose the GH26 domain. Trp285 provides a ligand contact to substrate. The Proton donor role is filled by Glu318. Residues Trp323 and Tyr378 each coordinate substrate. The active-site Nucleophile is the Glu406. Positions 472–489 (SGSSHNGNSESNSNTGNS) are linker. 3 consecutive CBM10 domains span residues 491–527 (ECWS…CGIV), 530–566 (SCWS…CGIV), and 569–605 (SCWA…CGIL). Trp493 provides a ligand contact to substrate.

The protein belongs to the glycosyl hydrolase 26 family.

It carries out the reaction Random hydrolysis of (1-&gt;4)-beta-D-mannosidic linkages in mannans, galactomannans and glucomannans.. Functionally, hydrolyzes 1,4-beta linked polysaccharide backbones of mannans, one of the major hemicellulose components in hardwoods and softwoods. Shows very high activity against mannohexaose but not against mannopentaose and smaller mannooligosaccharides. The major products released from mannooligosaccharide hydrolysis are mannose and mannobiose. The reiterated 40 AA domain is involved in binding the cellulase-hemicellulase complex. The sequence is that of Mannan endo-1,4-beta-mannosidase A (MANA) from Piromyces sp.